The chain runs to 421 residues: 3-isopropylmalate dehydratase large subunit (421 aa).

Residues cysteine 300, cysteine 360, and cysteine 363 each contribute to the [4Fe-4S] cluster site.

It belongs to the aconitase/IPM isomerase family. LeuC type 2 subfamily. As to quaternary structure, heterodimer of LeuC and LeuD. Requires [4Fe-4S] cluster as cofactor.

It carries out the reaction (2R,3S)-3-isopropylmalate = (2S)-2-isopropylmalate. Its pathway is amino-acid biosynthesis; L-leucine biosynthesis; L-leucine from 3-methyl-2-oxobutanoate: step 2/4. Its function is as follows. Catalyzes the isomerization between 2-isopropylmalate and 3-isopropylmalate, via the formation of 2-isopropylmaleate. The polypeptide is 3-isopropylmalate dehydratase large subunit (Lachnoclostridium phytofermentans (strain ATCC 700394 / DSM 18823 / ISDg) (Clostridium phytofermentans)).